The primary structure comprises 424 residues: Endoglucanase (424 aa).

The first 19 residues, M1 to G19, serve as a signal peptide directing secretion. C20 carries the N-palmitoyl cysteine lipid modification. Residue C20 is the site of S-diacylglycerol cysteine attachment. Positions C20–A43 are excised as a propeptide. Catalysis depends on E247, which acts as the Proton donor. E359 acts as the Nucleophile in catalysis.

This sequence belongs to the glycosyl hydrolase 5 (cellulase A) family.

It is found in the cell membrane. It catalyses the reaction Endohydrolysis of (1-&gt;4)-beta-D-glucosidic linkages in cellulose, lichenin and cereal beta-D-glucans.. In Ralstonia nicotianae (strain ATCC BAA-1114 / GMI1000) (Ralstonia solanacearum), this protein is Endoglucanase (egl).